A 738-amino-acid chain; its full sequence is Alcohol dehydrogenase (quinone), dehydrogenase subunit (738 aa).

The signal sequence occupies residues 1-35 (MISAVFGKRRSLSRTLTAGTICAALISGYATMASA). Glu-97 contacts pyrroloquinoline quinone. A disulfide bridge connects residues Cys-143 and Cys-144. Arg-149 contacts pyrroloquinoline quinone. Glu-217 serves as a coordination point for Ca(2+). Residue Thr-278 participates in pyrroloquinoline quinone binding. Residues Asn-298 and Asp-343 each coordinate Ca(2+). Residue Asp-343 is the Proton acceptor of the active site. Pyrroloquinoline quinone contacts are provided by Lys-370 and Ile-584. One can recognise a Cytochrome c domain in the interval 634 to 738 (FDSKRTDNGY…NADGIPEQLP (105 aa)). Cys-650, Cys-653, His-654, and Met-693 together coordinate heme c.

The protein belongs to the bacterial PQQ dehydrogenase family. In terms of assembly, the alcohol dehydrogenase multicomponent enzyme system is composed of a dehydrogenase subunit I (AdhA) and a cytochrome c subunit II (AdhB). It depends on pyrroloquinoline quinone as a cofactor. Ca(2+) serves as cofactor. Requires heme c as cofactor.

It localises to the cell membrane. It carries out the reaction ethanol + a ubiquinone = a ubiquinol + acetaldehyde. Its function is as follows. Dehydrogenase component of the alcohol dehydrogenase multicomponent enzyme system which is involved in the production of acetic acid and in the ethanol oxidase respiratory chain. Quinohemoprotein alcohol dehydrogenase (ADH) catalyzes the oxidation of ethanol to acetaldehyde by transferring electrons to the ubiquinone embedded in the membrane phospholipids. The electrons transfer from ethanol to membranous ubiquinone occurs from pyrroloquinoline quinone (PQQ) to one heme c in subunit I (AdhA), and finally to two heme c in subunit II (AdhB). Besides ubiquinone reduction, ADH also has a ubiquinol (QH2) oxidation reaction which mediates electron transfer from ubiquinol to the non-energy generating bypass oxidase system. The electrons transfer occurs from ubiquinol (QH2) to the additional heme c within subunit II (AdhB). The sequence is that of Alcohol dehydrogenase (quinone), dehydrogenase subunit (adhA) from Gluconacetobacter polyoxogenes (Acetobacter polyoxogenes).